Consider the following 890-residue polypeptide: MTFWCMSILLIVGFLSKSELCEAQLSDEATLVAINRELGVPGWSSNGTDYCTWVGLKCGVNNSFVEMLDLSGLQLRGNVTLISDLRSLKHLDLSGNNFNGRIPTSFGNLSELEFLDLSLNRFVGAIPVEFGKLRGLRAFNISNNLLVGEIPDELKVLERLEEFQVSGNGLNGSIPHWVGNLSSLRVFTAYENDLVGEIPNGLGLVSELELLNLHSNQLEGKIPKGIFEKGKLKVLVLTQNRLTGELPEAVGICSGLSSIRIGNNELVGVIPRTIGNISGLTYFEADKNNLSGEIVAEFSKCSNLTLLNLAANGFAGTIPTELGQLINLQELILSGNSLFGEIPKSFLGSGNLNKLDLSNNRLNGTIPKELCSMPRLQYLLLDQNSIRGDIPHEIGNCVKLLQLQLGRNYLTGTIPPEIGRMRNLQIALNLSFNHLHGSLPPELGKLDKLVSLDVSNNLLTGSIPPLLKGMMSLIEVNFSNNLLNGPVPVFVPFQKSPNSSFLGNKELCGAPLSSSCGYSEDLDHLRYNHRVSYRIVLAVIGSGVAVFVSVTVVVLLFMMREKQEKAAAKNVDVEENVEDEQPAIIAGNVFLENLKQGIDLDAVVKATMKESNKLSTGTFSSVYKAVMPSGMIVSVKKLKSMDRAISHHQNKMIRELERLSKLCHDHLVRPIGFVIYEDVALLLHQHLPNGNLTQLIHESTKKPEYQPDWPMRLSIAVGAAEGLAFLHQVAIIHLDVSSSNVLLDSGYKAVLGEIEISKLLDPSRGTASISSVAGSFGYIPPEYAYTMQVTAPGNVYSYGVVLLEILTSRAPVEEEFGEGVDLVKWVHGASARGETPEQILDAKLSTVSFAWRREMLAALKVALLCTDITPAKRPKMKKVVEMLQEVKQIK.

A signal peptide spans 1–23 (MTFWCMSILLIVGFLSKSELCEA). Residues 24-534 (QLSDEATLVA…LRYNHRVSYR (511 aa)) lie on the Extracellular side of the membrane. N-linked (GlcNAc...) asparagine glycosylation is found at Asn-46, Asn-61, Asn-78, and Asn-108. LRR repeat units lie at residues 67 to 85 (MLDL…ISDL), 86 to 108 (RSLK…SFGN), 110 to 132 (SELE…EFGK), 133 to 157 (LRGL…LKVL), 159 to 181 (RLEE…VGNL), 182 to 205 (SSLR…LGLV), 206 to 229 (SELE…IFEK), 231 to 254 (KLKV…GICS), 256 to 276 (LSSI…TIGN), 278 to 300 (SGLT…EFSK), 301 to 325 (CSNL…LGQL), 326 to 349 (INLQ…FLGS), 350 to 373 (GNLN…LCSM), 375 to 397 (RLQY…IGNC), 399 to 421 (KLLQ…IGRM), 422 to 446 (RNLQ…LGKL), 447 to 469 (DKLV…LLKG), and 471 to 492 (MSLI…VFVP). N-linked (GlcNAc...) asparagine glycosylation is found at Asn-140, Asn-171, and Asn-180. Residues Asn-276, Asn-289, and Asn-303 are each glycosylated (N-linked (GlcNAc...) asparagine). Asn-363 carries N-linked (GlcNAc...) asparagine glycosylation. N-linked (GlcNAc...) asparagine glycosylation occurs at Asn-429. 2 N-linked (GlcNAc...) asparagine glycosylation sites follow: Asn-477 and Asn-498. A helical membrane pass occupies residues 535–555 (IVLAVIGSGVAVFVSVTVVVL). The Cytoplasmic portion of the chain corresponds to 556–890 (LFMMREKQEK…EMLQEVKQIK (335 aa)). The 279-residue stretch at 608–886 (MKESNKLSTG…KKVVEMLQEV (279 aa)) folds into the Protein kinase domain. Residues 614–622 (LSTGTFSSV) and Lys-636 contribute to the ATP site. The active-site Proton acceptor is the Asp-735.

It belongs to the protein kinase superfamily. Tyr protein kinase family. Expressed in the vascular strands of cotyledons, the shoot apex, hypocotyls, roots, leaves, stems and flowers.

It localises to the cell membrane. The enzyme catalyses L-tyrosyl-[protein] + ATP = O-phospho-L-tyrosyl-[protein] + ADP + H(+). Its function is as follows. Leucine-rich repeat receptor-like protein kinase that may play a role in vascular tissues development. The protein is Leucine-rich repeat receptor-like tyrosine-protein kinase PXC3 of Arabidopsis thaliana (Mouse-ear cress).